Here is a 300-residue protein sequence, read N- to C-terminus: Porphobilinogen deaminase (300 aa).

C239 is modified (S-(dipyrrolylmethanemethyl)cysteine).

This sequence belongs to the HMBS family. Monomer. The cofactor is dipyrromethane.

The enzyme catalyses 4 porphobilinogen + H2O = hydroxymethylbilane + 4 NH4(+). The protein operates within porphyrin-containing compound metabolism; protoporphyrin-IX biosynthesis; coproporphyrinogen-III from 5-aminolevulinate: step 2/4. Functionally, tetrapolymerization of the monopyrrole PBG into the hydroxymethylbilane pre-uroporphyrinogen in several discrete steps. This Francisella tularensis subsp. tularensis (strain WY96-3418) protein is Porphobilinogen deaminase.